The primary structure comprises 435 residues: Monodehydroascorbate reductase 4, cytosolic (435 aa).

FAD contacts are provided by residues 14–17, Glu41, Arg48, Lys53, Ile96, and 147–148; these read GGVA and RD. Residues 172-178, Glu196, Arg202, and Gly261 contribute to the NAD(+) site; that span reads GGYIGLE. Residue 174 to 178 participates in NADP(+) binding; that stretch reads YIGLE. Residues Arg202 and Gly261 each contribute to the NADP(+) site. Asp298 contacts FAD. 314–315 serves as a coordination point for NAD(+); that stretch reads EH. 314 to 315 lines the NADP(+) pocket; sequence EH. Val316 contacts FAD. An L-ascorbate-binding site is contributed by Arg320. Residue Tyr349 participates in FAD binding. Tyr349 is an NAD(+) binding site. NADP(+) is bound at residue Tyr349. Arg351 contacts L-ascorbate.

This sequence belongs to the FAD-dependent oxidoreductase family. FAD is required as a cofactor. Expressed in anthers.

It localises to the cytoplasm. It carries out the reaction 2 monodehydro-L-ascorbate radical + NADH + H(+) = 2 L-ascorbate + NAD(+). Functionally, catalyzes the conversion of monodehydroascorbate to ascorbate, oxidizing NADH in the process. Ascorbate is a major antioxidant against reactive oxygen species (ROS) and nitric oxide (NO). This chain is Monodehydroascorbate reductase 4, cytosolic, found in Oryza sativa subsp. japonica (Rice).